Reading from the N-terminus, the 80-residue chain is UPF0125 protein XF_2346 (80 aa).

The protein belongs to the UPF0125 (RnfH) family.

In Xylella fastidiosa (strain 9a5c), this protein is UPF0125 protein XF_2346.